A 528-amino-acid polypeptide reads, in one-letter code: Membrane protein insertase YidC (528 aa).

4 consecutive transmembrane segments (helical) span residues 5-25 (VVIAVILSIAVLYAYSMIFPP), 346-366 (YGIAIIIITVILKLLFFPLTH), 416-436 (LPMIVQIPVFFALYKALMFSI), and 486-506 (MLALPVVFTFMFLNFPSGLVL).

The protein belongs to the OXA1/ALB3/YidC family. Type 1 subfamily. Interacts with the Sec translocase complex via SecD. Specifically interacts with transmembrane segments of nascent integral membrane proteins during membrane integration.

Its subcellular location is the cell inner membrane. Its function is as follows. Required for the insertion and/or proper folding and/or complex formation of integral membrane proteins into the membrane. Involved in integration of membrane proteins that insert both dependently and independently of the Sec translocase complex, as well as at least some lipoproteins. Aids folding of multispanning membrane proteins. The polypeptide is Membrane protein insertase YidC (Geotalea uraniireducens (strain Rf4) (Geobacter uraniireducens)).